The chain runs to 231 residues: Large ribosomal subunit protein uL1 (231 aa).

It belongs to the universal ribosomal protein uL1 family. Part of the 50S ribosomal subunit.

In terms of biological role, binds directly to 23S rRNA. The L1 stalk is quite mobile in the ribosome, and is involved in E site tRNA release. Its function is as follows. Protein L1 is also a translational repressor protein, it controls the translation of the L11 operon by binding to its mRNA. The protein is Large ribosomal subunit protein uL1 of Staphylococcus epidermidis (strain ATCC 35984 / DSM 28319 / BCRC 17069 / CCUG 31568 / BM 3577 / RP62A).